The sequence spans 127 residues: MIYGVGIDIINIKRVEHILSKNKQSFVKRVLSEHEQALFANKGDSAAYCAKRFAAKEAFAKALGTGIGKIISFQDLTVRNNENGKPNFFLSEKLRLYLVNKNIKQAHLSLSDEKFNTVAFVILETED.

Positions 8 and 57 each coordinate Mg(2+).

Belongs to the P-Pant transferase superfamily. AcpS family. It depends on Mg(2+) as a cofactor.

It is found in the cytoplasm. The enzyme catalyses apo-[ACP] + CoA = holo-[ACP] + adenosine 3',5'-bisphosphate + H(+). Its function is as follows. Transfers the 4'-phosphopantetheine moiety from coenzyme A to a Ser of acyl-carrier-protein. This Ruthia magnifica subsp. Calyptogena magnifica protein is Holo-[acyl-carrier-protein] synthase.